A 788-amino-acid polypeptide reads, in one-letter code: Ribonucleoside-diphosphate reductase large subunit (788 aa).

An ATP-cone domain is found at 7–98 (TYVVKRDGRK…VSNLHKKTNK (92 aa)). Residues 11 to 12 (KR), 17 to 23 (EDVHFDK), Thr59, and Asp63 each bind ATP. GDP-binding residues include Ser208 and Ser223. An intrachain disulfide couples Cys224 to Cys450. DTTP contacts are provided by residues 232 to 234 (DSI), Lys249, Arg262, and 269 to 270 (AG). Residue Asn433 coordinates GDP. Asn433 functions as the Proton acceptor in the catalytic mechanism. The active-site Cysteine radical intermediate is the Cys435. GDP-binding positions include Glu437 and 610-613 (TAST). The Proton acceptor role is filled by Glu437.

This sequence belongs to the ribonucleoside diphosphate reductase large chain family. As to quaternary structure, heterodimer of a large and a small subunit.

It carries out the reaction a 2'-deoxyribonucleoside 5'-diphosphate + [thioredoxin]-disulfide + H2O = a ribonucleoside 5'-diphosphate + [thioredoxin]-dithiol. Under complex allosteric control mediated by deoxynucleoside triphosphates and ATP binding to separate specificity and activation sites on the large subunit. The type of nucleotide bound at the specificity site determines substrate preference. It seems probable that ATP makes the enzyme reduce CDP and UDP, dGTP favors ADP reduction and dTTP favors GDP reduction. Stimulated by ATP and inhibited by dATP binding to the activity site. In terms of biological role, provides the precursors necessary for DNA synthesis. Catalyzes the biosynthesis of deoxyribonucleotides from the corresponding ribonucleotides. The polypeptide is Ribonucleoside-diphosphate reductase large subunit (rnr-1) (Caenorhabditis elegans).